Reading from the N-terminus, the 513-residue chain is ATP synthase subunit alpha (513 aa).

Position 169–176 (169–176) interacts with ATP; the sequence is GDRQIGKT.

Belongs to the ATPase alpha/beta chains family. F-type ATPases have 2 components, CF(1) - the catalytic core - and CF(0) - the membrane proton channel. CF(1) has five subunits: alpha(3), beta(3), gamma(1), delta(1), epsilon(1). CF(0) has three main subunits: a(1), b(2) and c(9-12). The alpha and beta chains form an alternating ring which encloses part of the gamma chain. CF(1) is attached to CF(0) by a central stalk formed by the gamma and epsilon chains, while a peripheral stalk is formed by the delta and b chains.

The protein localises to the cell inner membrane. The enzyme catalyses ATP + H2O + 4 H(+)(in) = ADP + phosphate + 5 H(+)(out). Produces ATP from ADP in the presence of a proton gradient across the membrane. The alpha chain is a regulatory subunit. The chain is ATP synthase subunit alpha from Francisella tularensis subsp. mediasiatica (strain FSC147).